Reading from the N-terminus, the 266-residue chain is UPF0354 protein Lm4b_01619 (266 aa).

Belongs to the UPF0354 family.

This is UPF0354 protein Lm4b_01619 from Listeria monocytogenes serotype 4b (strain CLIP80459).